Reading from the N-terminus, the 632-residue chain is MNGAGPGPAAAAPVPVPVPVPDWRQFCELHAQAAAVDFAHKFCRFLRDNPAYDTPDAGASFSRHFAANFLDVFGEEVRRVLVAGPTTRGAAVSAEAMEPELADTSALKAAPYGHSRSSEDVSTHAATKARVRKGFSLRNMSLCVVDGVRDMWHRRASPEPDAAAAPRTAEPRDKWTRRLRLSRTLAAKVELVDIQREGALRFMVADDAAAGSGGSAQWQKCRLLLRRAVAEERFRLEFFVPPKASRPKVSIPLSAIIEVRTTMPLEMPEKDNTFVLKVENGAEYILETIDSLQKHSWVADIQGCVDPGDSEEDTELSCTRGGCLASRVASCSCELLTDAVDLPRPPETTAVGAVVTAPHSRGRDAVRESLIHVPLETFLQTLESPGGSGSDSNNTGEQGAETDPEAEPELELSDYPWFHGTLSRVKAAQLVLAGGPRNHGLFVIRQSETRPGEYVLTFNFQGKAKHLRLSLNGHGQCHVQHLWFQSVLDMLRHFHTHPIPLESGGSADITLRSYVRAQDPPPEPGPTPPAAPASPACWSDSPGQHYFSSLAAAACPPASPSDAAGASSSSASSSSAASGPAPPRPVEGQLSARSRSNSAERLLEAVAATAAEEPPEAAPGRARAVENQYSFY.

Tyr52 is subject to Phosphotyrosine. A Phosphoserine modification is found at Ser141. Positions 193–306 (DIQREGALRF…WVADIQGCVD (114 aa)) constitute a PH domain. A Phosphoserine modification is found at Ser310. The interval 381-409 (TLESPGGSGSDSNNTGEQGAETDPEAEPE) is disordered. Positions 400-409 (AETDPEAEPE) are enriched in acidic residues. The 99-residue stretch at 417-515 (WFHGTLSRVK…SADITLRSYV (99 aa)) folds into the SH2 domain. Disordered regions lie at residues 516 to 537 (RAQD…SPAC) and 558 to 632 (ASPS…YSFY). The segment covering 519–532 (DPPPEPGPTPPAAP) has biased composition (pro residues). 2 stretches are compositionally biased toward low complexity: residues 558-579 (ASPS…AASG) and 604-626 (EAVA…RAVE). Tyr629 carries the post-translational modification Phosphotyrosine.

This sequence belongs to the SH2B adapter family. As to quaternary structure, homodimer. Interacts with KIT/c-KIT, SHC1, EPOR, PDGFR, VAV1 and VAV3. Interacts (via N-terminal region) with SHC1. Interacts (via the phosphorylated C-terminus) with GRB2. Interacts (via its SH2 domain) with EPOR, INSR and KIT. Interacts with GRB2 after B-cell antigen receptor stimulation. Interacts (via PH domain) with VAV3. Interacts with NTRK1, NTRK2 and NTRK3 (phosphorylated); after stimulation of the receptor by its extracellular ligand and subsequent autophosphorylation of the receptor. Binds INSR, GRB2, ASB6 and CAP. Insulin stimulation leads to dissociation of CAP. Binds CBS only when SH2B2/APS has become phosphorylated. INSR binding does not depend on the phosphorylation of SH2B2/APS. In terms of processing, tyrosine phosphorylated by JAK2, KIT and other kinases activated by B-cell receptor in response to stimulation with cytokines, IL3, IL5, PDGF, IGF1, IGF2, CSF2/GM-CSF and cross-linking of the B-cell receptor complex. Expressed in spleen, prostate, testis, uterus, small intestine and skeletal muscle. Among hematopoietic cell lines, expressed exclusively in B-cells. Not expressed in most tumor cell lines.

It localises to the cytoplasm. The protein resides in the cell membrane. Functionally, adapter protein for several members of the tyrosine kinase receptor family. Involved in multiple signaling pathways. May be involved in coupling from immunoreceptor to Ras signaling. Acts as a negative regulator of cytokine signaling in collaboration with CBL. Binds to EPOR and suppresses EPO-induced STAT5 activation, possibly through a masking effect on STAT5 docking sites in EPOR. Suppresses PDGF-induced mitogenesis. May induce cytoskeletal reorganization via interaction with VAV3. The chain is SH2B adapter protein 2 (SH2B2) from Homo sapiens (Human).